A 456-amino-acid chain; its full sequence is Glycerol-3-phosphate acyltransferase 4 (456 aa).

An N-terminal signal peptide occupies residues 1-37 (MFLLLPFDSLIVNLLGISLTVLFTLLLVFIIVPAIFG). Helical transmembrane passes span 156 to 176 (ISLR…CFLL) and 180 to 200 (IALA…VGYL). The N-linked (GlcNAc...) asparagine glycan is linked to Asn247. Residues 248–253 (HTSPID) carry the HXXXXD motif motif. Asn327, Asn328, and Asn362 each carry an N-linked (GlcNAc...) asparagine glycan.

The protein belongs to the 1-acyl-sn-glycerol-3-phosphate acyltransferase family.

It localises to the endoplasmic reticulum membrane. It carries out the reaction sn-glycerol 3-phosphate + an acyl-CoA = a 1-acyl-sn-glycero-3-phosphate + CoA. The catalysed reaction is dodecanoyl-CoA + sn-glycerol 3-phosphate = 1-dodecanoyl-sn-glycerol 3-phosphate + CoA. It catalyses the reaction sn-glycerol 3-phosphate + hexadecanoyl-CoA = 1-hexadecanoyl-sn-glycero-3-phosphate + CoA. The enzyme catalyses sn-glycerol 3-phosphate + octadecanoyl-CoA = 1-octadecanoyl-sn-glycero-3-phosphate + CoA. It carries out the reaction sn-glycerol 3-phosphate + (9Z)-octadecenoyl-CoA = 1-(9Z-octadecenoyl)-sn-glycero-3-phosphate + CoA. The catalysed reaction is (9Z,12Z)-octadecadienoyl-CoA + sn-glycerol 3-phosphate = 1-(9Z,12Z)-octadecadienoyl-sn-glycero-3-phosphate + CoA. The protein operates within phospholipid metabolism; CDP-diacylglycerol biosynthesis; CDP-diacylglycerol from sn-glycerol 3-phosphate: step 1/3. In terms of biological role, converts glycerol-3-phosphate to 1-acyl-sn-glycerol-3-phosphate (lysophosphatidic acid or LPA) by incorporating an acyl moiety at the sn-1 position of the glycerol backbone. Active against both saturated and unsaturated long-chain fatty acyl-CoAs. Protects cells against lipotoxicity. The chain is Glycerol-3-phosphate acyltransferase 4 from Pongo abelii (Sumatran orangutan).